We begin with the raw amino-acid sequence, 364 residues long: Long-wave-sensitive opsin 1 (364 aa).

Residues 1 to 52 lie on the Extracellular side of the membrane; sequence MAQRWGPQKLAGGQPQAGFEDSTQASIFTYTNNNATRDPFEGPNYHIAPRWV. O-linked (GlcNAc) serine glycosylation occurs at Ser22. N-linked (GlcNAc...) asparagine glycosylation is present at Asn34. A helical transmembrane segment spans residues 53-77; it reads YHVTSAWMIFVVIASVFTNGLVLAA. Residues 78-89 lie on the Cytoplasmic side of the membrane; it reads TMRFKKLRHPLN. Residues 90–115 traverse the membrane as a helical segment; the sequence is WILVNLAVADLAETIIASTISVVNQI. The Extracellular segment spans residues 116-129; that stretch reads YGYFVLGHPMCVVE. Cys126 and Cys203 are oxidised to a cystine. A helical transmembrane segment spans residues 130-149; it reads GYTVSLCGITGLWSLAIISW. Residues 150–168 lie on the Cytoplasmic side of the membrane; the sequence is ERWMVVCKPFGNVRFDAKL. Residues 169 to 192 traverse the membrane as a helical segment; sequence AVAGIAFSWIWAAVWTAPPIFGWS. The Extracellular portion of the chain corresponds to 193–218; the sequence is RYWPHGLKTSCGPDVFSGSSYPGVQS. A helical transmembrane segment spans residues 219–246; the sequence is YMIVLMITCCIIPLSVIVLCYLQVWLAI. Residues 247–268 lie on the Cytoplasmic side of the membrane; the sequence is RAVAKQQKESESTQKAEKEVTR. A helical membrane pass occupies residues 269–292; the sequence is MVMVMVFAFCLCWGPYTFFACFAA. The Extracellular segment spans residues 293-300; that stretch reads AHPGYAFH. Residues 301 to 325 form a helical membrane-spanning segment; sequence PLVAALPAYFAKSATIYNPIIYVFM. Position 312 is an N6-(retinylidene)lysine (Lys312). Topologically, residues 326–364 are cytoplasmic; the sequence is NRQFRNCILQLFGKKVDDSSELSSVSKTEASSVSSVSPA.

This sequence belongs to the G-protein coupled receptor 1 family. Opsin subfamily. Post-translationally, phosphorylated on some or all of the serine and threonine residues present in the C-terminal region. The three color pigments are found in the cone photoreceptor cells. Expressed in retina.

Its subcellular location is the membrane. Its function is as follows. Visual pigments are the light-absorbing molecules that mediate vision. They consist of an apoprotein, opsin, covalently linked to cis-retinal. The polypeptide is Long-wave-sensitive opsin 1 (OPN1LW) (Equus caballus (Horse)).